Consider the following 416-residue polypeptide: Tryptophan synthase beta chain (416 aa).

Residue lysine 109 is modified to N6-(pyridoxal phosphate)lysine.

The protein belongs to the TrpB family. Tetramer of two alpha and two beta chains. Requires pyridoxal 5'-phosphate as cofactor.

It carries out the reaction (1S,2R)-1-C-(indol-3-yl)glycerol 3-phosphate + L-serine = D-glyceraldehyde 3-phosphate + L-tryptophan + H2O. It functions in the pathway amino-acid biosynthesis; L-tryptophan biosynthesis; L-tryptophan from chorismate: step 5/5. Functionally, the beta subunit is responsible for the synthesis of L-tryptophan from indole and L-serine. This Prochlorococcus marinus (strain SARG / CCMP1375 / SS120) protein is Tryptophan synthase beta chain.